Reading from the N-terminus, the 327-residue chain is Olfactory receptor 9G4 (327 aa).

Over 1–43 the chain is Extracellular; the sequence is MIFPSHDSQAFTSVDMEVGNCTILTEFILLGFSADSQWQPILF. A glycan (N-linked (GlcNAc...) asparagine) is linked at Asn20. Residues 44–64 traverse the membrane as a helical segment; sequence GVFLMLYLITLSGNMTLVILI. Over 65 to 71 the chain is Cytoplasmic; sequence RTDSHLH. The helical transmembrane segment at 72-92 threads the bilayer; the sequence is TPMYFFIGNLSFLDFWYTSVY. The Extracellular segment spans residues 93-113; it reads TPKILASCVSEDKRISLAGCG. Cys112 and Cys194 are oxidised to a cystine. The chain crosses the membrane as a helical span at residues 114–134; it reads AQLFFSCVVAYTECYLLAAMA. Over 135-152 the chain is Cytoplasmic; that stretch reads YDRHAAICNPLLYSGTMS. Residues 153-173 form a helical membrane-spanning segment; it reads TALCTGLVAGSYIGGFLNAIA. At 174–212 the chain is on the extracellular side; the sequence is HTANTFRLHFCGKNIIDHFFCDAPPLVKMSCTNTRVYEK. A helical transmembrane segment spans residues 213–233; the sequence is VLLGVVGFTVLSSILAILISY. Topologically, residues 234-252 are cytoplasmic; the sequence is VNILLAILRIHSASGRHKA. Residues 253–273 traverse the membrane as a helical segment; sequence FSTCASHLISVMLFYGSLLFM. The Extracellular portion of the chain corresponds to 274–286; that stretch reads YSRPSSTYSLERD. The helical transmembrane segment at 287-307 threads the bilayer; it reads KVAALFYTVINPLLNPLIYSL. Topologically, residues 308–327 are cytoplasmic; that stretch reads RNKDIKEAFRKATQTIQPQT.

This sequence belongs to the G-protein coupled receptor 1 family.

It is found in the cell membrane. Functionally, odorant receptor. This Homo sapiens (Human) protein is Olfactory receptor 9G4 (OR9G4).